Here is an 84-residue protein sequence, read N- to C-terminus: LLIITACLALIGTVWAKEGYLVDKNTGCKYECLKLGDNDYCLRECKQQYGKGAGGYCYAFACWCTHLYEQAIVWPLPNKRCSGK.

The first 16 residues, 1-16, serve as a signal peptide directing secretion; sequence LLIITACLALIGTVWA. The LCN-type CS-alpha/beta domain occupies 17–82; the sequence is KEGYLVDKNT…VWPLPNKRCS (66 aa). 4 disulfide bridges follow: Cys28-Cys81, Cys32-Cys57, Cys41-Cys62, and Cys45-Cys64. Ser82 carries the post-translational modification Serine amide.

Belongs to the long (4 C-C) scorpion toxin superfamily. Sodium channel inhibitor family. Beta subfamily. As to expression, expressed by the venom gland.

It is found in the secreted. Functionally, mammal beta-toxins bind voltage-independently at site-4 of sodium channels (Nav) and shift the activation voltage to more negative potentials. This toxin is active against mammals. This Centruroides noxius (Mexican scorpion) protein is Beta-mammal toxin Cn2.